The chain runs to 94 residues: Putative membrane protein insertion efficiency factor (94 aa).

This sequence belongs to the UPF0161 family.

The protein localises to the cell inner membrane. Functionally, could be involved in insertion of integral membrane proteins into the membrane. This chain is Putative membrane protein insertion efficiency factor, found in Albidiferax ferrireducens (strain ATCC BAA-621 / DSM 15236 / T118) (Rhodoferax ferrireducens).